The chain runs to 170 residues: ATP synthase F(1) complex subunit delta, mitochondrial (170 aa).

The transit peptide at 1–33 (MIRSIIKSSNNLLKSNVAINSNKRFFATEASAT) directs the protein to the mitochondrion.

This sequence belongs to the ATPase epsilon chain family. Component of the ATP synthase complex composed at least of ATP5F1A/subunit alpha, ATP5F1B/subunit beta, ATP5MC1/subunit c (homooctomer), MT-ATP6/subunit a, MT-ATP8/subunit 8, ATP5ME/subunit e, ATP5MF/subunit f, ATP5MG/subunit g, ATP5MK/subunit k, ATP5MJ/subunit j, ATP5F1C/subunit gamma, ATP5F1D/subunit delta, ATP5F1E/subunit epsilon, ATP5PF/subunit F6, ATP5PB/subunit b, ATP5PD/subunit d, ATP5PO/subunit OSCP. ATP synthase complex consists of a soluble F(1) head domain (subunits alpha(3) and beta(3)) - the catalytic core - and a membrane F(0) domain - the membrane proton channel (subunits c, a, 8, e, f, g, k and j). These two domains are linked by a central stalk (subunits gamma, delta, and epsilon) rotating inside the F1 region and a stationary peripheral stalk (subunits F6, b, d, and OSCP).

It localises to the mitochondrion. Its subcellular location is the mitochondrion inner membrane. Its function is as follows. Subunit delta, of the mitochondrial membrane ATP synthase complex (F(1)F(0) ATP synthase or Complex V) that produces ATP from ADP in the presence of a proton gradient across the membrane which is generated by electron transport complexes of the respiratory chain. ATP synthase complex consist of a soluble F(1) head domain - the catalytic core - and a membrane F(1) domain - the membrane proton channel. These two domains are linked by a central stalk rotating inside the F(1) region and a stationary peripheral stalk. During catalysis, ATP synthesis in the catalytic domain of F(1) is coupled via a rotary mechanism of the central stalk subunits to proton translocation. In vivo, can only synthesize ATP although its ATP hydrolase activity can be activated artificially in vitro. With the central stalk subunit gamma, is essential for the biogenesis of F(1) catalytic part of the ATP synthase complex namely in the formation of F1 assembly intermediate. This chain is ATP synthase F(1) complex subunit delta, mitochondrial, found in Dictyostelium discoideum (Social amoeba).